We begin with the raw amino-acid sequence, 201 residues long: Recombination protein RecR (201 aa).

A C4-type zinc finger spans residues 60–75 (CSCCGNVDTIDPCTVC). Positions 83-178 (AVIIVVEDVA…RITRLAHGVP (96 aa)) constitute a Toprim domain.

It belongs to the RecR family.

Functionally, may play a role in DNA repair. It seems to be involved in an RecBC-independent recombinational process of DNA repair. It may act with RecF and RecO. This Rhizobium meliloti (strain 1021) (Ensifer meliloti) protein is Recombination protein RecR.